A 170-amino-acid polypeptide reads, in one-letter code: Protein SprT (170 aa).

Positions 22 to 165 (LQLANQHLGT…RQCGEKLQFI (144 aa)) constitute a SprT-like domain. His78 contacts Zn(2+). Residue Glu79 is part of the active site. His82 serves as a coordination point for Zn(2+).

It belongs to the SprT family. Zn(2+) serves as cofactor.

It is found in the cytoplasm. This Yersinia pseudotuberculosis serotype O:1b (strain IP 31758) protein is Protein SprT.